Here is a 52-residue protein sequence, read N- to C-terminus: AKVLTLDLYKKLRDKSTPSGFTLDDIIQNEHLGYVLTCPSNLGTXLRAXVHV.

The Phosphagen kinase C-terminal domain occupies 1-52; the sequence is AKVLTLDLYKKLRDKSTPSGFTLDDIIQNEHLGYVLTCPSNLGTXLRAXVHV. The region spanning 1-52 is the Phosphagen kinase N-terminal domain; the sequence is AKVLTLDLYKKLRDKSTPSGFTLDDIIQNEHLGYVLTCPSNLGTXLRAXVHV. Arginine 13 and arginine 47 together coordinate ATP.

This sequence belongs to the ATP:guanido phosphotransferase family. Dimer of identical or non-identical chains, which can be either B (brain type) or M (muscle type). With MM being the major form in skeletal muscle and myocardium, MB existing in myocardium, and BB existing in many tissues, especially brain. In terms of tissue distribution, expressed in rectal gland, brain, skeletal muscle (at protein level).

The protein localises to the cytoplasm. It localises to the cytosol. It is found in the mitochondrion. The protein resides in the basal cell membrane. The enzyme catalyses creatine + ATP = N-phosphocreatine + ADP + H(+). Functionally, reversibly catalyzes the transfer of phosphate between ATP and various phosphogens (e.g. creatine phosphate). Creatine kinase isoenzymes play a central role in energy transduction in tissues with large, fluctuating energy demands, such as skeletal muscle, heart, brain and spermatozoa. The polypeptide is Creatine kinase B-type (Squalus acanthias (Spiny dogfish)).